We begin with the raw amino-acid sequence, 428 residues long: Gamma-glutamyl phosphate reductase (428 aa).

This sequence belongs to the gamma-glutamyl phosphate reductase family.

It is found in the cytoplasm. The catalysed reaction is L-glutamate 5-semialdehyde + phosphate + NADP(+) = L-glutamyl 5-phosphate + NADPH + H(+). It participates in amino-acid biosynthesis; L-proline biosynthesis; L-glutamate 5-semialdehyde from L-glutamate: step 2/2. Functionally, catalyzes the NADPH-dependent reduction of L-glutamate 5-phosphate into L-glutamate 5-semialdehyde and phosphate. The product spontaneously undergoes cyclization to form 1-pyrroline-5-carboxylate. In Chromohalobacter salexigens (strain ATCC BAA-138 / DSM 3043 / CIP 106854 / NCIMB 13768 / 1H11), this protein is Gamma-glutamyl phosphate reductase.